A 284-amino-acid polypeptide reads, in one-letter code: Avenin-like b4 (284 aa).

The N-terminal stretch at 1–18 (MKVFILALLALTATTAIA) is a signal peptide.

It belongs to the prolamin family. Post-translationally, contains disulfide bonds.

Functionally, seed storage protein. Might be integrated via inter-chain disulfide bonds within the glutenin polymer. In Triticum aestivum (Wheat), this protein is Avenin-like b4.